Here is a 66-residue protein sequence, read N- to C-terminus: Toxin Boma6a (66 aa).

The region spanning 2 to 64 is the LCN-type CS-alpha/beta domain; the sequence is RDAYIAQNYN…VPIKVEGKCH (63 aa). 4 disulfides stabilise this stretch: cysteine 12/cysteine 63, cysteine 16/cysteine 36, cysteine 22/cysteine 46, and cysteine 26/cysteine 48.

Belongs to the long (4 C-C) scorpion toxin superfamily. Sodium channel inhibitor family. Alpha subfamily. Expressed by the venom gland.

It localises to the secreted. Functionally, alpha toxins bind voltage-independently at site-3 of sodium channels (Nav) and inhibit the inactivation of the activated channels, thereby blocking neuronal transmission. In Buthus occitanus mardochei (Moroccan scorpion), this protein is Toxin Boma6a.